Reading from the N-terminus, the 655-residue chain is WD repeat-containing protein 70 (655 aa).

2 disordered regions span residues 1–24 (MEHS…LAVT) and 43–170 (FEQT…PIHR). Over residues 45-78 (QTRRTAVERSRKTLEAREKEEEMNREKELRKQLE) the composition is skewed to basic and acidic residues. The span at 99-112 (RDTSSSDSDHSSGS) shows a compositional bias: low complexity. A compositionally biased stretch (acidic residues) spans 148–165 (EEGEDDDDDDLEDEGEED). 7 WD repeats span residues 181-220 (HGTK…ASFK), 228-269 (CECH…ECIK), 282-322 (GHTA…KQKS), 331-370 (GKKV…HPKF), 377-416 (APGT…KPLF), 422-467 (PTLF…RVYE), and 470-509 (ITDA…QRGA). A Glycyl lysine isopeptide (Lys-Gly) (interchain with G-Cter in SUMO2) cross-link involves residue Lys297. The residue at position 453 (Lys453) is an N6-acetyllysine. Positions 541–566 (REPRQRSTRKQLEKDRLDPLKSHKPE) are enriched in basic and acidic residues. Residues 541-582 (REPRQRSTRKQLEKDRLDPLKSHKPEPPVAGPGRGGRVGTHG) form a disordered region. The span at 572–582 (PGRGGRVGTHG) shows a compositional bias: gly residues. Position 580 is a phosphothreonine (Thr580). Glycyl lysine isopeptide (Lys-Gly) (interchain with G-Cter in SUMO2) cross-links involve residues Lys591 and Lys597. Phosphoserine is present on residues Ser622 and Ser639. Positions 632–655 (TMFAQVESDDEESKNEPEWKKRKI) are disordered. The span at 645–655 (KNEPEWKKRKI) shows a compositional bias: basic and acidic residues.

The protein belongs to the WD repeat GAD-1 family.

The chain is WD repeat-containing protein 70 (Wdr70) from Rattus norvegicus (Rat).